The chain runs to 556 residues: 2-isopropylmalate synthase (556 aa).

A Pyruvate carboxyltransferase domain is found at 33–307 (PIWCSSDLRD…HPQLDFSDID (275 aa)). Residues Asp42, His246, His248, and Asn282 each contribute to the Mg(2+) site. The interval 439 to 556 (ATSPYALASH…AVTQAEAKAA (118 aa)) is regulatory domain.

The protein belongs to the alpha-IPM synthase/homocitrate synthase family. LeuA type 2 subfamily. Homodimer. Requires Mg(2+) as cofactor.

The protein localises to the cytoplasm. The catalysed reaction is 3-methyl-2-oxobutanoate + acetyl-CoA + H2O = (2S)-2-isopropylmalate + CoA + H(+). It functions in the pathway amino-acid biosynthesis; L-leucine biosynthesis; L-leucine from 3-methyl-2-oxobutanoate: step 1/4. Catalyzes the condensation of the acetyl group of acetyl-CoA with 3-methyl-2-oxobutanoate (2-ketoisovalerate) to form 3-carboxy-3-hydroxy-4-methylpentanoate (2-isopropylmalate). This Pseudomonas paraeruginosa (strain DSM 24068 / PA7) (Pseudomonas aeruginosa (strain PA7)) protein is 2-isopropylmalate synthase.